The primary structure comprises 297 residues: Aspartate carbamoyltransferase catalytic subunit (297 aa).

Residues arginine 49 and threonine 50 each contribute to the carbamoyl phosphate site. Lysine 77 lines the L-aspartate pocket. Carbamoyl phosphate is bound by residues arginine 99, histidine 129, and glutamine 132. 2 residues coordinate L-aspartate: arginine 162 and arginine 215. Carbamoyl phosphate contacts are provided by glycine 256 and proline 257.

It belongs to the aspartate/ornithine carbamoyltransferase superfamily. ATCase family. Heterododecamer (2C3:3R2) of six catalytic PyrB chains organized as two trimers (C3), and six regulatory PyrI chains organized as three dimers (R2).

The catalysed reaction is carbamoyl phosphate + L-aspartate = N-carbamoyl-L-aspartate + phosphate + H(+). The protein operates within pyrimidine metabolism; UMP biosynthesis via de novo pathway; (S)-dihydroorotate from bicarbonate: step 2/3. Functionally, catalyzes the condensation of carbamoyl phosphate and aspartate to form carbamoyl aspartate and inorganic phosphate, the committed step in the de novo pyrimidine nucleotide biosynthesis pathway. This Legionella pneumophila (strain Lens) protein is Aspartate carbamoyltransferase catalytic subunit.